The chain runs to 170 residues: Cathelicidin antimicrobial peptide (170 aa).

A signal peptide spans 1–30 (MKTQRHGPSLGRWSLVLLLLGLVMPLAIVA). The propeptide at 31-131 (QVLSYQEAVL…DISCDKDNRR (101 aa)) is cathelin-like domain (CLD). Intrachain disulfides connect Cys86–Cys97 and Cys108–Cys125. The segment at 150-162 (LKKIGQKIKDFWG) is active core.

Belongs to the cathelicidin family. Monomer, homodimer or homotrimer (in vitro). Oligomerizes as tetra- or hexamer in solution (in vitro). Proteolytically cleaved by proteinase PRTN3 into antibacterial peptide LL-37. Proteolytically cleaved by cathepsin CTSG and neutrophil elastase ELANE. In terms of processing, resistant to proteolytic degradation in solution, and when bound to both zwitterionic (mimicking mammalian membranes) and negatively charged membranes (mimicking bacterial membranes). Post-translationally, after secretion onto the skin surface, the CAMP gene product is processed by a serine protease-dependent mechanism into multiple novel antimicrobial peptides distinct from and shorter than cathelicidin LL-37. These peptides show enhanced antimicrobial action, acquiring the ability to kill skin pathogens such as S.aureus, E.coli and C.albicans. These peptides have lost the ability to stimulate CXCL8/IL8 release from keratinocytes. The peptides act synergistically, killing bacteria at lower concentrations when present together, and maintain activity at increased salt condition.

Its subcellular location is the secreted. The protein localises to the vesicle. Functionally, antimicrobial protein that is an integral component of the innate immune system. Binds to bacterial lipopolysaccharides (LPS). Acts via neutrophil N-formyl peptide receptors to enhance the release of CXCL2. Postsecretory processing generates multiple cathelicidin antimicrobial peptides with various lengths which act as a topical antimicrobial defense in sweat on skin. The unprocessed precursor form, cathelicidin antimicrobial peptide, inhibits the growth of Gram-negative E.coli and E.aerogenes with efficiencies comparable to that of the mature peptide LL-37 (in vitro). Its function is as follows. Antimicrobial peptide that is an integral component of the innate immune system. Binds to bacterial lipopolysaccharides (LPS). Causes membrane permeabilization by forming transmembrane pores (in vitro). Causes lysis of E.coli. Exhibits antimicrobial activity against Gram-negative bacteria such as P.aeruginosa, S.typhimurium, E.aerogenes, E.coli and P.syringae, Gram-positive bacteria such as L.monocytogenes, S.epidermidis, S.pyogenes and S.aureus, as well as vancomycin-resistant enterococci (in vitro). Exhibits antimicrobial activity against methicillin-resistant S.aureus, P.mirabilis, and C.albicans in low-salt media, but not in media containing 100 mM NaCl (in vitro). Forms chiral supramolecular assemblies with quinolone signal (PQS) molecules of P.aeruginosa, which may lead to interference of bacterial quorum signaling and perturbance of bacterial biofilm formation. May form supramolecular fiber-like assemblies on bacterial membranes. Induces cytokine and chemokine producation as well as TNF/TNFA and CSF2/GMCSF production in normal human keratinocytes. Exhibits hemolytic activity against red blood cells. Exhibits antimicrobial activity against E.coli and B.megaterium (in vitro). This Trachypithecus cristatus (Silvered leaf-monkey) protein is Cathelicidin antimicrobial peptide.